Here is a 219-residue protein sequence, read N- to C-terminus: uncharacterized protein (219 aa).

This is an uncharacterized protein from Rickettsia prowazekii (strain Madrid E).